The following is a 362-amino-acid chain: MLKVGSSLLAADGGGLSPRFALGLAQFVSANLAAGREVVIVSSGAVAAGRAILPKAAEAGAAIAARQALAALGQAQLIALWQRFFERPVAQVLLTHDDLRNRRRYLNARATLGELLRLGALPVINENDTVSVDELKLGDNDNLAAIVAALVDADALFIATDIDGLYSADPRSNPLARPLDEVAELSAEVLAMAGGSGSSVGTGGMRTKLEAAAKAGAAGIETYLFNGRSAEVVRGLAQDRLCGTRIHAARTRIAARKYWLRHAPVEPGTILIDAGAALALTDKGASLLPGGVAGAEGDFRRGDMVEIHLRDSVGSRCLARGVSQYSALDVRRIARRHSREIEPILGYSYGENVVHRDDLVVL.

K3 lines the ATP pocket. Substrate-binding residues include S43, D128, and N140. Residues 160-161 and 202-208 contribute to the ATP site; these read TD and TGGMRTK. Residues 267 to 348 enclose the PUA domain; it reads PGTILIDAGA…REIEPILGYS (82 aa).

This sequence belongs to the glutamate 5-kinase family.

The protein localises to the cytoplasm. The enzyme catalyses L-glutamate + ATP = L-glutamyl 5-phosphate + ADP. It participates in amino-acid biosynthesis; L-proline biosynthesis; L-glutamate 5-semialdehyde from L-glutamate: step 1/2. Its function is as follows. Catalyzes the transfer of a phosphate group to glutamate to form L-glutamate 5-phosphate. The protein is Glutamate 5-kinase of Xanthomonas campestris pv. campestris (strain 8004).